We begin with the raw amino-acid sequence, 99 residues long: Nucleoid-associated protein SEQ_0368 (99 aa).

It belongs to the YbaB/EbfC family. In terms of assembly, homodimer.

It is found in the cytoplasm. Its subcellular location is the nucleoid. In terms of biological role, binds to DNA and alters its conformation. May be involved in regulation of gene expression, nucleoid organization and DNA protection. The polypeptide is Nucleoid-associated protein SEQ_0368 (Streptococcus equi subsp. equi (strain 4047)).